Here is a 306-residue protein sequence, read N- to C-terminus: Elongation factor Ts (306 aa).

Positions 80-83 (TDFV) are involved in Mg(2+) ion dislocation from EF-Tu.

Belongs to the EF-Ts family.

Its subcellular location is the cytoplasm. Associates with the EF-Tu.GDP complex and induces the exchange of GDP to GTP. It remains bound to the aminoacyl-tRNA.EF-Tu.GTP complex up to the GTP hydrolysis stage on the ribosome. The protein is Elongation factor Ts of Leptothrix cholodnii (strain ATCC 51168 / LMG 8142 / SP-6) (Leptothrix discophora (strain SP-6)).